The chain runs to 761 residues: Semaphorin-4A (761 aa).

Residues 1 to 32 (MALPALGLDPWSLLGLFLFQLLQLLLPTTTAG) form the signal peptide. Residues 33 to 683 (GGGQGPMPRV…LAAQQSYWPH (651 aa)) are Extracellular-facing. The Sema domain occupies 36–494 (QGPMPRVRYY…FSGGVWRVPR (459 aa)). Cys-113 and Cys-124 are joined by a disulfide. 2 N-linked (GlcNAc...) asparagine glycosylation sites follow: Asn-120 and Asn-135. Disulfide bonds link Cys-142-Cys-151, Cys-269-Cys-379, and Cys-293-Cys-339. A glycan (N-linked (GlcNAc...) asparagine) is linked at Asn-496. One can recognise a PSI domain in the interval 496 to 548 (NCSVYESCVDCVLARDPHCAWDPESRTCCLLSAPNLNSWKQDMERGNPEWACA). 3 cysteine pairs are disulfide-bonded: Cys-497–Cys-514, Cys-506–Cys-523, and Cys-580–Cys-624. One can recognise an Ig-like C2-type domain in the interval 573–631 (NSILELPCPHLSALASYYWSHGPAAVPEASSTVYNGSLLLIVQDGVGGLYQCWATENGF). N-linked (GlcNAc...) asparagine glycosylation is present at Asn-607. Residues 684–704 (FVTVTVLFALVLSGALIILVA) traverse the membrane as a helical segment. Topologically, residues 705 to 761 (SPLRALRARGKVQGCETLRPGEKAPLSREQHLQSPKECRTSASDVDADNNCLGTEVA) are cytoplasmic. Residues 722 to 749 (LRPGEKAPLSREQHLQSPKECRTSASDV) form a disordered region. Over residues 723-743 (RPGEKAPLSREQHLQSPKECR) the composition is skewed to basic and acidic residues.

The protein belongs to the semaphorin family. Interacts with PLXNB1, PLXNB2, PLXNB3, PLXND1 and TIMD2.

The protein resides in the cell membrane. Its function is as follows. Cell surface receptor for PLXNB1, PLXNB2, PLXNB3 and PLXND1 that plays an important role in cell-cell signaling. Regulates glutamatergic and GABAergic synapse development. Promotes the development of inhibitory synapses in a PLXNB1-dependent manner and promotes the development of excitatory synapses in a PLXNB2-dependent manner. Plays a role in priming antigen-specific T-cells, promotes differentiation of Th1 T-helper cells, and thereby contributes to adaptive immunity. Promotes phosphorylation of TIMD2. Inhibits angiogenesis. Promotes axon growth cone collapse. Inhibits axonal extension by providing local signals to specify territories inaccessible for growing axons. This is Semaphorin-4A (SEMA4A) from Homo sapiens (Human).